We begin with the raw amino-acid sequence, 91 residues long: Large ribosomal subunit protein uL22 (91 aa).

This sequence belongs to the universal ribosomal protein uL22 family. Part of the 50S ribosomal subunit.

Its function is as follows. This protein binds specifically to 23S rRNA; its binding is stimulated by other ribosomal proteins, e.g. L4, L17, and L20. It is important during the early stages of 50S assembly. It makes multiple contacts with different domains of the 23S rRNA in the assembled 50S subunit and ribosome. Functionally, the globular domain of the protein is located near the polypeptide exit tunnel on the outside of the subunit, while an extended beta-hairpin is found that lines the wall of the exit tunnel in the center of the 70S ribosome. This is Large ribosomal subunit protein uL22 (rplV) from Ash yellows phytoplasma.